The following is a 650-amino-acid chain: Serine/threonine-protein phosphatase with EF-hands 1 (650 aa).

The IQ domain maps to 16–45 (VIKAALVIQNWYRRYRARLRVRQHYALAIF). The interval 124–456 (IHILLQAFKQ…PQFFQYQVTS (333 aa)) is catalytic. Residues Asp175, His177, Asp204, and Asn236 each coordinate Mn(2+). Catalysis depends on His237, which acts as the Proton donor. His288 contributes to the Mn(2+) binding site. A disordered region spans residues 315 to 348 (PVLGNQETGEKRNKSASNYVEPRKVEPDKTPSED). A compositionally biased stretch (basic and acidic residues) spans 335–348 (EPRKVEPDKTPSED). His404 serves as a coordination point for Mn(2+). EF-hand domains follow at residues 484–519 (SRKT…ILGL), 567–602 (RYRS…FNAH), and 607–642 (IDDS…VHKY). The Ca(2+) site is built by Asp497, Ser499, Ser501, Arg503, Glu508, Asp580, Asp582, Ser584, Glu591, Asp620, Asn622, Asp624, Asn626, and Glu631.

The protein belongs to the PPP phosphatase family. Requires Mn(2+) as cofactor. Mg(2+) is required as a cofactor. In terms of tissue distribution, in the embryo it is almost exclusively expressed in the peripheral nervous system, within sensory neurons of cranial and dorsal root ganglia. Otherwise found in fetal inner ear and a small group of neurons in the midbrain/pons junction.

It carries out the reaction O-phospho-L-seryl-[protein] + H2O = L-seryl-[protein] + phosphate. The catalysed reaction is O-phospho-L-threonyl-[protein] + H2O = L-threonyl-[protein] + phosphate. Its activity is regulated as follows. Activated by calcium. May have a role in the recovery or adaptation response of photoreceptors. May have a role in diverse sensory neurons and in development. The protein is Serine/threonine-protein phosphatase with EF-hands 1 (Ppef1) of Mus musculus (Mouse).